A 314-amino-acid chain; its full sequence is Ornithine carbamoyltransferase (314 aa).

Carbamoyl phosphate contacts are provided by residues 58-61, Gln85, Arg109, and 136-139; these read STRT and HPLQ. L-ornithine is bound by residues Asn168, Asp232, and 236-237; that span reads SM. Carbamoyl phosphate contacts are provided by residues 272–273 and Arg300; that span reads CL.

It belongs to the aspartate/ornithine carbamoyltransferase superfamily. OTCase family.

It localises to the cytoplasm. The catalysed reaction is carbamoyl phosphate + L-ornithine = L-citrulline + phosphate + H(+). Its pathway is amino-acid biosynthesis; L-arginine biosynthesis; L-arginine from L-ornithine and carbamoyl phosphate: step 1/3. Functionally, reversibly catalyzes the transfer of the carbamoyl group from carbamoyl phosphate (CP) to the N(epsilon) atom of ornithine (ORN) to produce L-citrulline. This chain is Ornithine carbamoyltransferase, found in Hyperthermus butylicus (strain DSM 5456 / JCM 9403 / PLM1-5).